Reading from the N-terminus, the 682-residue chain is DNA-directed RNA polymerase subunit beta' (682 aa).

Residues Cys-69, Cys-71, Cys-87, and Cys-90 each contribute to the Zn(2+) site. Mg(2+) is bound by residues Asp-489, Asp-491, and Asp-493.

Belongs to the RNA polymerase beta' chain family. RpoC1 subfamily. As to quaternary structure, in plastids the minimal PEP RNA polymerase catalytic core is composed of four subunits: alpha, beta, beta', and beta''. When a (nuclear-encoded) sigma factor is associated with the core the holoenzyme is formed, which can initiate transcription. Requires Mg(2+) as cofactor. The cofactor is Zn(2+).

The protein resides in the plastid. The protein localises to the chloroplast. The catalysed reaction is RNA(n) + a ribonucleoside 5'-triphosphate = RNA(n+1) + diphosphate. In terms of biological role, DNA-dependent RNA polymerase catalyzes the transcription of DNA into RNA using the four ribonucleoside triphosphates as substrates. The sequence is that of DNA-directed RNA polymerase subunit beta' from Agrostis stolonifera (Creeping bentgrass).